The chain runs to 512 residues: ATP synthase subunit alpha (512 aa).

169-176 (GDRQTGKT) is an ATP binding site.

The protein belongs to the ATPase alpha/beta chains family. In terms of assembly, F-type ATPases have 2 components, CF(1) - the catalytic core - and CF(0) - the membrane proton channel. CF(1) has five subunits: alpha(3), beta(3), gamma(1), delta(1), epsilon(1). CF(0) has four main subunits: a(1), b(1), b'(1) and c(9-12).

The protein localises to the cell inner membrane. The catalysed reaction is ATP + H2O + 4 H(+)(in) = ADP + phosphate + 5 H(+)(out). Functionally, produces ATP from ADP in the presence of a proton gradient across the membrane. The alpha chain is a regulatory subunit. The polypeptide is ATP synthase subunit alpha (Jannaschia sp. (strain CCS1)).